Consider the following 96-residue polypeptide: UPF0235 protein YPN_3141 (96 aa).

The protein belongs to the UPF0235 family.

The chain is UPF0235 protein YPN_3141 from Yersinia pestis bv. Antiqua (strain Nepal516).